Here is a 319-residue protein sequence, read N- to C-terminus: Methionyl-tRNA formyltransferase (319 aa).

Residue 113-116 (SLLP) coordinates (6S)-5,6,7,8-tetrahydrofolate.

Belongs to the Fmt family.

The enzyme catalyses L-methionyl-tRNA(fMet) + (6R)-10-formyltetrahydrofolate = N-formyl-L-methionyl-tRNA(fMet) + (6S)-5,6,7,8-tetrahydrofolate + H(+). In terms of biological role, attaches a formyl group to the free amino group of methionyl-tRNA(fMet). The formyl group appears to play a dual role in the initiator identity of N-formylmethionyl-tRNA by promoting its recognition by IF2 and preventing the misappropriation of this tRNA by the elongation apparatus. This chain is Methionyl-tRNA formyltransferase, found in Hamiltonella defensa subsp. Acyrthosiphon pisum (strain 5AT).